The chain runs to 268 residues: NH(3)-dependent NAD(+) synthetase (268 aa).

45-52 (GLSGGIDS) is an ATP binding site. Aspartate 51 serves as a coordination point for Mg(2+). Arginine 129 provides a ligand contact to deamido-NAD(+). Threonine 149 contacts ATP. Glutamate 154 contributes to the Mg(2+) binding site. 2 residues coordinate deamido-NAD(+): lysine 162 and aspartate 169. Residues lysine 178 and threonine 200 each contribute to the ATP site. 260–261 (HK) lines the deamido-NAD(+) pocket.

The protein belongs to the NAD synthetase family. In terms of assembly, homodimer.

It carries out the reaction deamido-NAD(+) + NH4(+) + ATP = AMP + diphosphate + NAD(+) + H(+). Its pathway is cofactor biosynthesis; NAD(+) biosynthesis; NAD(+) from deamido-NAD(+) (ammonia route): step 1/1. Functionally, catalyzes the ATP-dependent amidation of deamido-NAD to form NAD. Uses ammonia as a nitrogen source. The polypeptide is NH(3)-dependent NAD(+) synthetase (Halobacterium salinarum (strain ATCC 29341 / DSM 671 / R1)).